Here is a 441-residue protein sequence, read N- to C-terminus: Serine carboxypeptidase-like 2 (441 aa).

A signal peptide spans 1–29; that stretch reads MANKYFSSVLKSLLLLLHLVFLSKQHVDS. 3 disulfide bridges follow: cysteine 88/cysteine 331, cysteine 252/cysteine 266, and cysteine 290/cysteine 297. Asparagine 109 is a glycosylation site (N-linked (GlcNAc...) asparagine). Residue serine 184 is part of the active site. Asparagine 350 is a glycosylation site (N-linked (GlcNAc...) asparagine). Residue aspartate 366 is part of the active site. Asparagine 382 carries an N-linked (GlcNAc...) asparagine glycan. The active site involves histidine 419.

Belongs to the peptidase S10 family. Expressed in seedlings and roots.

Its subcellular location is the secreted. Probable carboxypeptidase. This is Serine carboxypeptidase-like 2 (SCPL2) from Arabidopsis thaliana (Mouse-ear cress).